A 411-amino-acid chain; its full sequence is Putative nickel insertion protein (411 aa).

This sequence belongs to the LarC family.

This is Putative nickel insertion protein from Acaryochloris marina (strain MBIC 11017).